We begin with the raw amino-acid sequence, 500 residues long: Cysteine-rich secretory protein LCCL domain-containing 1 (500 aa).

Residues 1 to 23 form the signal peptide; that stretch reads MKCTAREWLRVTTVLFMARAIPA. The region spanning 66 to 206 is the SCP domain; the sequence is LDLHNKLRSQ…PKAVYLVCNY (141 aa). Over residues 254–280 the composition is skewed to basic and acidic residues; that stretch reads EETNEIERQQSQVHDTHVRTRSDDSSR. A disordered region spans residues 254–281; the sequence is EETNEIERQQSQVHDTHVRTRSDDSSRN. LCCL domains are found at residues 289-384 and 390-492; these read MSQI…ANSF and TVQA…PGGK. Cystine bridges form between Cys-295/Cys-313, Cys-317/Cys-337, Cys-396/Cys-418, and Cys-422/Cys-445.

Belongs to the CRISP family.

It localises to the secreted. The sequence is that of Cysteine-rich secretory protein LCCL domain-containing 1 (CRISPLD1) from Homo sapiens (Human).